The following is a 395-amino-acid chain: Immediate-early protein ICP-46 (395 aa).

It belongs to the IIV-6 393L family.

The chain is Immediate-early protein ICP-46 (ICR489) from Dryophytes versicolor (chameleon treefrog).